Reading from the N-terminus, the 428-residue chain is Dihydroorotase (428 aa).

Positions 59 and 61 each coordinate Zn(2+). Substrate contacts are provided by residues histidine 61–arginine 63 and asparagine 93. Aspartate 151, histidine 178, and histidine 231 together coordinate Zn(2+). Asparagine 277 provides a ligand contact to substrate. Aspartate 304 contacts Zn(2+). Residue aspartate 304 is part of the active site. Substrate-binding positions include histidine 308 and phenylalanine 322–glycine 323.

The protein belongs to the metallo-dependent hydrolases superfamily. DHOase family. Class I DHOase subfamily. It depends on Zn(2+) as a cofactor.

It carries out the reaction (S)-dihydroorotate + H2O = N-carbamoyl-L-aspartate + H(+). Its pathway is pyrimidine metabolism; UMP biosynthesis via de novo pathway; (S)-dihydroorotate from bicarbonate: step 3/3. In terms of biological role, catalyzes the reversible cyclization of carbamoyl aspartate to dihydroorotate. The polypeptide is Dihydroorotase (Bacillus cereus (strain G9842)).